We begin with the raw amino-acid sequence, 268 residues long: tRNA pseudouridine synthase A (268 aa).

The Nucleophile role is filled by aspartate 52. Tyrosine 110 is a binding site for substrate.

It belongs to the tRNA pseudouridine synthase TruA family. As to quaternary structure, homodimer.

It catalyses the reaction uridine(38/39/40) in tRNA = pseudouridine(38/39/40) in tRNA. Its function is as follows. Formation of pseudouridine at positions 38, 39 and 40 in the anticodon stem and loop of transfer RNAs. This Prochlorococcus marinus (strain MIT 9312) protein is tRNA pseudouridine synthase A.